Reading from the N-terminus, the 577-residue chain is Proline--tRNA ligase (577 aa).

It belongs to the class-II aminoacyl-tRNA synthetase family. ProS type 1 subfamily. In terms of assembly, homodimer.

It localises to the cytoplasm. It carries out the reaction tRNA(Pro) + L-proline + ATP = L-prolyl-tRNA(Pro) + AMP + diphosphate. Its function is as follows. Catalyzes the attachment of proline to tRNA(Pro) in a two-step reaction: proline is first activated by ATP to form Pro-AMP and then transferred to the acceptor end of tRNA(Pro). As ProRS can inadvertently accommodate and process non-cognate amino acids such as alanine and cysteine, to avoid such errors it has two additional distinct editing activities against alanine. One activity is designated as 'pretransfer' editing and involves the tRNA(Pro)-independent hydrolysis of activated Ala-AMP. The other activity is designated 'posttransfer' editing and involves deacylation of mischarged Ala-tRNA(Pro). The misacylated Cys-tRNA(Pro) is not edited by ProRS. This chain is Proline--tRNA ligase, found in Chlamydia abortus (strain DSM 27085 / S26/3) (Chlamydophila abortus).